The chain runs to 698 residues: Elongation factor G (698 aa).

Positions 8 to 290 constitute a tr-type G domain; that stretch reads ERYRNIGIAA…AVIEFLPAPN (283 aa). GTP-binding positions include 17–24, 88–92, and 142–145; these read AHIDAGKT, DTPGH, and NKMD.

This sequence belongs to the TRAFAC class translation factor GTPase superfamily. Classic translation factor GTPase family. EF-G/EF-2 subfamily.

It is found in the cytoplasm. Its function is as follows. Catalyzes the GTP-dependent ribosomal translocation step during translation elongation. During this step, the ribosome changes from the pre-translocational (PRE) to the post-translocational (POST) state as the newly formed A-site-bound peptidyl-tRNA and P-site-bound deacylated tRNA move to the P and E sites, respectively. Catalyzes the coordinated movement of the two tRNA molecules, the mRNA and conformational changes in the ribosome. The chain is Elongation factor G from Halorhodospira halophila (strain DSM 244 / SL1) (Ectothiorhodospira halophila (strain DSM 244 / SL1)).